A 398-amino-acid polypeptide reads, in one-letter code: Acetate kinase 1 (398 aa).

Asn-9 contacts Mg(2+). Lys-16 lines the ATP pocket. Arg-89 provides a ligand contact to substrate. Asp-146 acts as the Proton donor/acceptor in catalysis. ATP is bound by residues 206–210 (HLGNG), 281–283 (DCR), and 329–333 (GIGEN). Glu-384 serves as a coordination point for Mg(2+).

This sequence belongs to the acetokinase family. In terms of assembly, homodimer. The cofactor is Mg(2+). Requires Mn(2+) as cofactor.

The protein resides in the cytoplasm. It carries out the reaction acetate + ATP = acetyl phosphate + ADP. Its pathway is metabolic intermediate biosynthesis; acetyl-CoA biosynthesis; acetyl-CoA from acetate: step 1/2. Catalyzes the formation of acetyl phosphate from acetate and ATP. Can also catalyze the reverse reaction. The polypeptide is Acetate kinase 1 (Vibrio cholerae serotype O1 (strain ATCC 39315 / El Tor Inaba N16961)).